Here is a 317-residue protein sequence, read N- to C-terminus: Porphobilinogen deaminase (317 aa).

Position 245 is an S-(dipyrrolylmethanemethyl)cysteine (C245).

The protein belongs to the HMBS family. As to quaternary structure, monomer. Dipyrromethane serves as cofactor.

It carries out the reaction 4 porphobilinogen + H2O = hydroxymethylbilane + 4 NH4(+). It participates in porphyrin-containing compound metabolism; protoporphyrin-IX biosynthesis; coproporphyrinogen-III from 5-aminolevulinate: step 2/4. It functions in the pathway porphyrin-containing compound metabolism; chlorophyll biosynthesis. Tetrapolymerization of the monopyrrole PBG into the hydroxymethylbilane pre-uroporphyrinogen in several discrete steps. This Synechococcus sp. (strain RCC307) protein is Porphobilinogen deaminase.